The chain runs to 553 residues: Protein PALS2 (553 aa).

L27 domains lie at 1–48 (MQQV…EDSK) and 49–107 (LEAV…YDSP). A PDZ domain is found at 129–208 (ILGIHKKAGE…SVTLKILPSY (80 aa)). Residues 228–297 (VRQVFVKCHF…PSQFLEEKRK (70 aa)) form the SH3 domain. The region spanning 351-538 (RKTLVLIGAQ…AFEKLQTAIE (188 aa)) is the Guanylate kinase-like domain. Position 513 is a phosphotyrosine (Y513).

This sequence belongs to the MAGUK family. Interacts with CADM1. Interacts with the LIN7 proteins.

It is found in the membrane. In Mus musculus (Mouse), this protein is Protein PALS2.